The sequence spans 240 residues: UDP-2,3-diacylglucosamine hydrolase (240 aa).

The Mn(2+) site is built by Asp-8, His-10, Asp-41, Asn-79, and His-114. A substrate-binding site is contributed by 79-80; that stretch reads NR. Substrate contacts are provided by Asp-122, Ser-160, Asn-164, Lys-167, and His-195. His-195 and His-197 together coordinate Mn(2+).

Belongs to the LpxH family. The cofactor is Mn(2+).

Its subcellular location is the cell inner membrane. The enzyme catalyses UDP-2-N,3-O-bis[(3R)-3-hydroxytetradecanoyl]-alpha-D-glucosamine + H2O = 2-N,3-O-bis[(3R)-3-hydroxytetradecanoyl]-alpha-D-glucosaminyl 1-phosphate + UMP + 2 H(+). It functions in the pathway glycolipid biosynthesis; lipid IV(A) biosynthesis; lipid IV(A) from (3R)-3-hydroxytetradecanoyl-[acyl-carrier-protein] and UDP-N-acetyl-alpha-D-glucosamine: step 4/6. Its function is as follows. Hydrolyzes the pyrophosphate bond of UDP-2,3-diacylglucosamine to yield 2,3-diacylglucosamine 1-phosphate (lipid X) and UMP by catalyzing the attack of water at the alpha-P atom. Involved in the biosynthesis of lipid A, a phosphorylated glycolipid that anchors the lipopolysaccharide to the outer membrane of the cell. This chain is UDP-2,3-diacylglucosamine hydrolase, found in Shigella boydii serotype 18 (strain CDC 3083-94 / BS512).